Consider the following 426-residue polypeptide: Deoxyguanosinetriphosphate triphosphohydrolase-like protein (426 aa).

The interval Met-1–Ala-23 is disordered. Residues Arg-67–Ser-217 enclose the HD domain.

Belongs to the dGTPase family. Type 2 subfamily.

This Corynebacterium efficiens (strain DSM 44549 / YS-314 / AJ 12310 / JCM 11189 / NBRC 100395) protein is Deoxyguanosinetriphosphate triphosphohydrolase-like protein.